The following is an 843-amino-acid chain: Protein P (843 aa).

Residues 1-177 (MPLSYPHFRK…FCGSQYSWEQ (177 aa)) form a terminal protein domain (TP) region. Residues 178-346 (ELQHGSTSLN…YCLSHIINLL (169 aa)) form a spacer region. Disordered regions lie at residues 228–255 (KQGQ…RWPA) and 284–314 (EANP…SVGS). The span at 239–249 (RSGRLRSRVHT) shows a compositional bias: basic residues. Positions 347–690 (EDWGPCYEHG…YMNLYPVARQ (344 aa)) are polymerase/reverse transcriptase domain (RT). The Reverse transcriptase domain maps to 357-600 (EHHIRTPRTP…YNLHFMGYVI (244 aa)). 3 residues coordinate Mg(2+): Asp-429, Asp-551, and Asp-552.

It belongs to the hepadnaviridae P protein family.

The enzyme catalyses DNA(n) + a 2'-deoxyribonucleoside 5'-triphosphate = DNA(n+1) + diphosphate. It carries out the reaction Endonucleolytic cleavage to 5'-phosphomonoester.. Its activity is regulated as follows. Activated by host HSP70 and HSP40 in vitro to be able to bind the epsilon loop of the pgRNA. Because deletion of the RNase H region renders the protein partly chaperone-independent, the chaperones may be needed indirectly to relieve occlusion of the RNA-binding site by this domain. Inhibited by several reverse-transcriptase inhibitors: Lamivudine, Adefovir and Entecavir. Its function is as follows. Multifunctional enzyme that converts the viral RNA genome into dsDNA in viral cytoplasmic capsids. This enzyme displays a DNA polymerase activity that can copy either DNA or RNA templates, and a ribonuclease H (RNase H) activity that cleaves the RNA strand of RNA-DNA heteroduplexes in a partially processive 3'- to 5'-endonucleasic mode. Neo-synthesized pregenomic RNA (pgRNA) are encapsidated together with the P protein, and reverse-transcribed inside the nucleocapsid. Initiation of reverse-transcription occurs first by binding the epsilon loop on the pgRNA genome, and is initiated by protein priming, thereby the 5'-end of (-)DNA is covalently linked to P protein. Partial (+)DNA is synthesized from the (-)DNA template and generates the relaxed circular DNA (RC-DNA) genome. After budding and infection, the RC-DNA migrates in the nucleus, and is converted into a plasmid-like covalently closed circular DNA (cccDNA). The activity of P protein does not seem to be necessary for cccDNA generation, and is presumably released from (+)DNA by host nuclear DNA repair machinery. This is Protein P from Hepatitis B virus genotype F2 subtype adw4q (isolate Senegal/9203) (HBV-F).